A 640-amino-acid polypeptide reads, in one-letter code: Threonine--tRNA ligase (640 aa).

A TGS domain is found at 1–61; that stretch reads MPVITLPDGS…SNDATLQIIT (61 aa). The interval 242–533 is catalytic; that stretch reads DHRKIGKQLD…LIEHYAGVFP (292 aa). Cysteine 333, histidine 384, and histidine 510 together coordinate Zn(2+).

Belongs to the class-II aminoacyl-tRNA synthetase family. As to quaternary structure, homodimer. Requires Zn(2+) as cofactor.

The protein localises to the cytoplasm. It catalyses the reaction tRNA(Thr) + L-threonine + ATP = L-threonyl-tRNA(Thr) + AMP + diphosphate + H(+). Functionally, catalyzes the attachment of threonine to tRNA(Thr) in a two-step reaction: L-threonine is first activated by ATP to form Thr-AMP and then transferred to the acceptor end of tRNA(Thr). Also edits incorrectly charged L-seryl-tRNA(Thr). This chain is Threonine--tRNA ligase, found in Pseudomonas putida (strain ATCC 700007 / DSM 6899 / JCM 31910 / BCRC 17059 / LMG 24140 / F1).